An 896-amino-acid chain; its full sequence is Rho GTPase-activating protein gacM (896 aa).

The disordered stretch occupies residues M1 to S97. The segment covering N10–P26 has biased composition (low complexity). The span at L27–S38 shows a compositional bias: polar residues. 2 stretches are compositionally biased toward low complexity: residues S45 to S57 and N65 to S97. The 192-residue stretch at Q139–S330 folds into the Rho-GAP domain. Composition is skewed to low complexity over residues I375 to P391, S400 to T427, P448 to T460, and N473 to N506. 2 disordered regions span residues I375–L514 and L701–I770. Positions P702–E711 are enriched in polar residues. 2 stretches are compositionally biased toward low complexity: residues N712–P743 and S751–N761.

It is found in the cytoplasm. Its function is as follows. Rho GTPase-activating protein involved in the signal transduction pathway. The sequence is that of Rho GTPase-activating protein gacM (gacM) from Dictyostelium discoideum (Social amoeba).